Consider the following 600-residue polypeptide: Proline--tRNA ligase (600 aa).

This sequence belongs to the class-II aminoacyl-tRNA synthetase family. ProS type 1 subfamily. Homodimer.

The protein localises to the cytoplasm. It catalyses the reaction tRNA(Pro) + L-proline + ATP = L-prolyl-tRNA(Pro) + AMP + diphosphate. Catalyzes the attachment of proline to tRNA(Pro) in a two-step reaction: proline is first activated by ATP to form Pro-AMP and then transferred to the acceptor end of tRNA(Pro). As ProRS can inadvertently accommodate and process non-cognate amino acids such as alanine and cysteine, to avoid such errors it has two additional distinct editing activities against alanine. One activity is designated as 'pretransfer' editing and involves the tRNA(Pro)-independent hydrolysis of activated Ala-AMP. The other activity is designated 'posttransfer' editing and involves deacylation of mischarged Ala-tRNA(Pro). The misacylated Cys-tRNA(Pro) is not edited by ProRS. This chain is Proline--tRNA ligase, found in Prochlorococcus marinus (strain MIT 9211).